The chain runs to 545 residues: MLLLHRAVVLRLQQACRLKSIPSRIYIQACSTNDSFRPQYPSLTFSGDNSSTRGWKVMGTLLGLGAVLAYQDHRCRAAQESTRIYTKEEVSSHTSPETGIWVALGSEVFDVTEFADLHPGGPSKLMLAAGGPLEPFWALYAVHNQSHVRELLAQYKVGELNPEDKVAPTVETSDPYADDPVRHPALKVNSQRPFNAEPPPELLTENYITPNPIFFTRNHLPVPNLDPDTYRLHIVGAPGGQSLSLSLDDLHNFPKYEITVTLQCAGNRRSEMTQVKEVKGLEWRTGAISTARWAGARLCDVLAKAGHQLCETEAHVCFEGLDSDPTGTAYGASIPLARAMDPEAGVLLAYEMNGQPLPRDHGFPVRVVVPGVVGARHVKWLGRVSVQPEESYSHWQRRDYKGFSPSVDWDTVDFDSAPSIQELPVQSAITEPRDGETVESGEVTIKGYAWSGGGRAVIRVDVSLDGGLTWQVAKLDGEEQRPRKAWAWRLWQLQAPVPAGQKELNIVCKAVDDGYNVQPDTVAPIWNLRGVLSNAWHRVHVFVAP.

The transit peptide at 1 to 79 (MLLLHRAVVL…YQDHRCRAAQ (79 aa)) directs the protein to the mitochondrion. Residues 82 to 161 (TRIYTKEEVS…LAQYKVGELN (80 aa)) form the Cytochrome b5 heme-binding domain. Position 118 (His-118) interacts with heme b. Ser-123 bears the Phosphoserine mark. Heme b contacts are provided by His-143, Gln-145, and His-147. The segment at 165–174 (KVAPTVETSD) is hinge. The moco domain stretch occupies residues 175-401 (PYADDPVRHP…YSHWQRRDYK (227 aa)). Residues 215-219 (FTRNH), Cys-264, Asp-322, His-361, Arg-366, and 377-379 (HVK) each bind Mo-molybdopterin. Residues 402-538 (GFSPSVDWDT…RGVLSNAWHR (137 aa)) form a homodimerization region.

In terms of assembly, homodimer. The cofactor is heme b. It depends on Mo-molybdopterin as a cofactor.

It localises to the mitochondrion intermembrane space. It carries out the reaction sulfite + O2 + H2O = sulfate + H2O2. It participates in energy metabolism; sulfur metabolism. In terms of biological role, catalyzes the oxidation of sulfite to sulfate, the terminal reaction in the oxidative degradation of sulfur-containing amino acids. This Macaca fascicularis (Crab-eating macaque) protein is Sulfite oxidase, mitochondrial (SUOX).